A 266-amino-acid chain; its full sequence is Undecaprenyl-diphosphatase (266 aa).

The next 8 membrane-spanning stretches (helical) occupy residues 1 to 21 (MDTL…FLPI), 39 to 59 (QGLS…VIYF), 83 to 103 (SKLA…GFTA), 111 to 131 (LRGP…LWFA), 149 to 169 (ALLI…RSGI), 183 to 203 (AAAR…ALLM), 218 to 238 (ALAL…YFFL), and 246 to 266 (MTPF…FIYL).

This sequence belongs to the UppP family.

Its subcellular location is the cell inner membrane. It catalyses the reaction di-trans,octa-cis-undecaprenyl diphosphate + H2O = di-trans,octa-cis-undecaprenyl phosphate + phosphate + H(+). Functionally, catalyzes the dephosphorylation of undecaprenyl diphosphate (UPP). Confers resistance to bacitracin. In Shewanella amazonensis (strain ATCC BAA-1098 / SB2B), this protein is Undecaprenyl-diphosphatase.